The following is a 402-amino-acid chain: CCA-adding enzyme (402 aa).

Gly32 and Arg35 together coordinate ATP. Gly32 and Arg35 together coordinate CTP. Positions 45 and 47 each coordinate Mg(2+). Residues Arg116, Asp159, Arg162, Arg165, and Arg168 each coordinate ATP. CTP-binding residues include Arg116, Asp159, Arg162, Arg165, and Arg168.

This sequence belongs to the tRNA nucleotidyltransferase/poly(A) polymerase family. Bacterial CCA-adding enzyme type 3 subfamily. Homodimer. Mg(2+) is required as a cofactor.

The enzyme catalyses a tRNA precursor + 2 CTP + ATP = a tRNA with a 3' CCA end + 3 diphosphate. The catalysed reaction is a tRNA with a 3' CCA end + 2 CTP + ATP = a tRNA with a 3' CCACCA end + 3 diphosphate. Its function is as follows. Catalyzes the addition and repair of the essential 3'-terminal CCA sequence in tRNAs without using a nucleic acid template. Adds these three nucleotides in the order of C, C, and A to the tRNA nucleotide-73, using CTP and ATP as substrates and producing inorganic pyrophosphate. tRNA 3'-terminal CCA addition is required both for tRNA processing and repair. Also involved in tRNA surveillance by mediating tandem CCA addition to generate a CCACCA at the 3' terminus of unstable tRNAs. While stable tRNAs receive only 3'-terminal CCA, unstable tRNAs are marked with CCACCA and rapidly degraded. This is CCA-adding enzyme from Streptococcus agalactiae serotype III (strain NEM316).